The primary structure comprises 63 residues: Small, acid-soluble spore protein H 2 (63 aa).

This sequence belongs to the SspH family.

The protein localises to the spore core. This chain is Small, acid-soluble spore protein H 2, found in Clostridium botulinum (strain ATCC 19397 / Type A).